Consider the following 538-residue polypeptide: Eukaryotic translation initiation factor 3 subunit L (538 aa).

The region spanning 305–513 (TFSDILLYIQ…IHIADTKVSH (209 aa)) is the PCI domain.

This sequence belongs to the eIF-3 subunit L family. In terms of assembly, component of the eukaryotic translation initiation factor 3 (eIF-3) complex. The eIF-3 complex interacts with pix.

The protein resides in the cytoplasm. Component of the eukaryotic translation initiation factor 3 (eIF-3) complex, which is involved in protein synthesis of a specialized repertoire of mRNAs and, together with other initiation factors, stimulates binding of mRNA and methionyl-tRNAi to the 40S ribosome. The eIF-3 complex specifically targets and initiates translation of a subset of mRNAs involved in cell proliferation. The chain is Eukaryotic translation initiation factor 3 subunit L from Drosophila mojavensis (Fruit fly).